We begin with the raw amino-acid sequence, 604 residues long: Dopamine receptor 3 (604 aa).

The Extracellular portion of the chain corresponds to 1 to 23 (MLTGQHHIPGIESPLMVVLWRVA). The chain crosses the membrane as a helical span at residues 24 to 44 (AGVFLPLVPTMAVFGNVLVIL). Residues 45-58 (SVYRERNLQTVTNM) are Cytoplasmic-facing. Residues 59–79 (LIVSLAVSDLFVAIGVMSFGV) form a helical membrane-spanning segment. Over 80–96 (YYEWNGFKWGLGSFFCH) the chain is Extracellular. Residues Cys95 and Cys170 are joined by a disulfide bond. A helical membrane pass occupies residues 97 to 117 (VYQALDVACSTASILNLLAIS). Residues 118 to 141 (LDRYIAIGHPISYAQYGARGGRAM) are Cytoplasmic-facing. A helical transmembrane segment spans residues 142-162 (ISITIVWGVSCAVALPLLLGV). Residues 163 to 179 (NPMENDQCELANPWFNM) lie on the Extracellular side of the membrane. A helical membrane pass occupies residues 180–200 (ISSIFSFFIPCIAMIILYTII). At 201–520 (FRRLRQRERA…TKQMRREHKA (320 aa)) the chain is on the cytoplasmic side. The interval 399–430 (SIQDEKKMNSRPPENPFAHQNGTNKQRLLPNP) is disordered. The helical transmembrane segment at 521–541 (TVTLAVVLAVFLFCWLPFFIL) threads the bilayer. Topologically, residues 542-559 (HLSNSICLVIDSNSDCIG) are extracellular. The chain crosses the membrane as a helical span at residues 560-580 (FLPLYLATWLGYLNSSLNPLI). Residues 581 to 604 (YTVFDQRFRNAFRNILSCGFFKKR) lie on the Cytoplasmic side of the membrane.

It belongs to the G-protein coupled receptor 1 family.

Its subcellular location is the cell membrane. Receptor for dopamine. The activity of this receptor is mediated by G proteins which activate adenylyl cyclase. In terms of antagonist responses, would be classed with the D2-like dopamine receptor group. Mediates the effect of dopamine on the inhibition of locomotion. Acts as an antagonist of dop-1. This is Dopamine receptor 3 from Caenorhabditis briggsae.